Here is a 109-residue protein sequence, read N- to C-terminus: Tetracenomycin F2 cyclase (109 aa).

Homodimer.

It carries out the reaction tetracenomycin F2 + H(+) = tetracenomycin F1 + H2O. The protein operates within antibiotic biosynthesis; tetracenomycin C biosynthesis. Catalyzing the conversion of tetracenomycin F2 to tetracenomycin F1. In Streptomyces glaucescens, this protein is Tetracenomycin F2 cyclase (tcmI).